The primary structure comprises 926 residues: MLRAQRPRLARLRACLSRGLHHKPVMALRREDVNAWERRAPLAPKHIKGITKLGYKVLIQPSNRRAIHDKEYVRAGGILQEDITEACLILGVKRPPEEKLMSKKTYAFFSHTIKAQEANMNLLDEVLKQEIRLIDYEKMVDHRGSRIVAFGQWAGVAGMINILHGMGLRLLALGHHTPFMHLGMAHNYRNSSQAVQAVRDAGYEISLGLMPKSIGPLTFVFTGTGNVSKGAQEVFNELPCEYVEPHELREVSKTGDLRKVYGTVLSRHHHLVRKTDGVYDPVEYEKYPERYTSRFNTDIAPYTTCLINGIYWEQNTPRLLTRQDAQSLLVPVKSSVVPVEGCPELPHKLVAICDISADTGGSIDFMTECTTIERPFCMYDADQQIIHDSVEGSGILMCSIDNLPAQLPIEATEYFGDMLYPYVEEMLLSDASQPLESQNFSPVVRDAVITSNGLLTDKYKYIQKLRESRERIQFLSMSTKKKVLVLGSGYVSGPVLEYLSRDNNIEITLGSDMTNQMQQLSKKYNINPVSLTVGKQEAKLQSLVESQDLVISLLPYVLHPVVAKACIESRVNMVTASYITPAMKELEKSVDDAGITVIGELGLDPGLDHMLAMETIDTAKELGATVESYVSYCGGLPAPEHSDNPLRYKFSWSPVGVLMNIMQPASYLLNGKVVNVTGGVSFLNSVTPMDYFPGLNLEGYPNRDSIKYAEIYGISSAHTLLRGTLRYKGYSKALNGFVKLGLINREAYPALRPEANPLTWKQLLCDLVGISRSSPCEKLKEVVFTKLGGDNTQLEAAEWLGLLGDEQVPQAESIVDAFSKHLVSKLSYGPEEKDMIVMRDSFGIRHPSGHLENKTIDLVVYGDFNGFSAMAKTVGLPTAMAAKMLLDGEIEAKGLMGPFTKEIYGPILERIKAEGIVFNTQSTIKL.

The N-terminal 27 residues, 1–27 (MLRAQRPRLARLRACLSRGLHHKPVMA), are a transit peptide targeting the mitochondrion. Residues 28–455 (LRREDVNAWE…DAVITSNGLL (428 aa)) are lysine-ketoglutarate reductase. Lys48, Lys52, and Lys56 each carry N6-acetyllysine. Lys93 is modified (N6-acetyllysine; alternate). At Lys93 the chain carries N6-succinyllysine; alternate. Lys128 carries the post-translational modification N6-acetyllysine. N6-acetyllysine; alternate is present on Lys138. Lys138 carries the N6-succinyllysine; alternate modification. Lys274 carries the post-translational modification N6-succinyllysine. Lys286 is modified (N6-acetyllysine; alternate). At Lys286 the chain carries N6-succinyllysine; alternate. Lys333 is modified (N6-succinyllysine). Position 458 is an N6-acetyllysine; alternate (Lys458). Position 458 is an N6-succinyllysine; alternate (Lys458). The interval 477–926 (MSTKKKVLVL…VFNTQSTIKL (450 aa)) is saccharopine dehydrogenase. Residues Ser488, Asp512, and Gln516 each coordinate NAD(+). Lys523 and Lys535 each carry N6-acetyllysine; alternate. 2 positions are modified to N6-succinyllysine; alternate: Lys523 and Lys535. The NAD(+) site is built by Leu554, Ala576, and Ser577. Residue 577–578 (SY) participates in L-saccharopine binding. At Lys584 the chain carries N6-acetyllysine; alternate. Lys584 is subject to N6-succinyllysine; alternate. NAD(+) is bound by residues Leu603, Asp604, and Pro605. An L-saccharopine-binding site is contributed by Asp604. Arg703 is a binding site for L-saccharopine. Lys707 carries the post-translational modification N6-acetyllysine. An L-saccharopine-binding site is contributed by 724-726 (TLR). The residue at position 732 (Lys732) is an N6-succinyllysine. Lys739 carries the post-translational modification N6-acetyllysine. An N6-acetyllysine; alternate modification is found at Lys761. N6-succinyllysine; alternate is present on Lys761. An N6-acetyllysine mark is found at Lys778 and Lys780.

In the N-terminal section; belongs to the AlaDH/PNT family. It in the C-terminal section; belongs to the saccharopine dehydrogenase family. As to quaternary structure, homotetramer. In terms of tissue distribution, highly expressed in kidney and liver, very low expression is seen in heart, brain, spleen, lung, skeletal muscle and testis.

The protein resides in the mitochondrion. The catalysed reaction is L-saccharopine + NADP(+) + H2O = L-lysine + 2-oxoglutarate + NADPH + H(+). The enzyme catalyses L-saccharopine + NAD(+) + H2O = (S)-2-amino-6-oxohexanoate + L-glutamate + NADH + H(+). It participates in amino-acid degradation; L-lysine degradation via saccharopine pathway; glutaryl-CoA from L-lysine: step 1/6. The protein operates within amino-acid degradation; L-lysine degradation via saccharopine pathway; glutaryl-CoA from L-lysine: step 2/6. Its function is as follows. Bifunctional enzyme that catalyzes the first two steps in lysine degradation. This Mus musculus (Mouse) protein is Alpha-aminoadipic semialdehyde synthase, mitochondrial.